Reading from the N-terminus, the 351-residue chain is ATP-dependent protease ATP-binding subunit-like protein (351 aa).

Positions 1-26 (MPYITDMLRDRNSAATPPAEERSEPV) are disordered. 79–86 (GPTGVGKT) provides a ligand contact to ATP.

This sequence belongs to the ClpA/ClpB family.

This chain is ATP-dependent protease ATP-binding subunit-like protein, found in Rhodococcus erythropolis (Arthrobacter picolinophilus).